We begin with the raw amino-acid sequence, 765 residues long: Amyloid beta precursor like protein 2 (765 aa).

The first 31 residues, 1–31 (MAATGTAAAAATGKLLVLLLLGLTAPAAALA), serve as a signal peptide directing secretion. Over 32–695 (GYIEALAANA…LREDFSLSSS (664 aa)) the chain is Extracellular. Residues 46–139 (AVAEPQIAMF…PFKCLVGEFV (94 aa)) are GFLD subdomain. The 160-residue stretch at 46–205 (AVAEPQIAMF…HGTEYVCCPQ (160 aa)) folds into the E1 domain. 6 disulfides stabilise this stretch: Cys56–Cys80, Cys91–Cys133, Cys116–Cys123, Cys149–Cys203, Cys160–Cys190, and Cys174–Cys202. The interval 147-205 (ENCQFFHQERMEVCEKHQRWHTVVKEACLTEGMTLYSYGMLLPCGVDQFHGTEYVCCPQ) is cuBD subdomain. Residues His163, His167, and Tyr184 each contribute to the Cu cation site. Residues 211-301 (SDSTMSKEEE…EPSSDGTISD (91 aa)) form a disordered region. The residue at position 216 (Ser216) is a Phosphoserine. Composition is skewed to acidic residues over residues 218 to 231 (EEEE…EEDY) and 240 to 271 (TEAD…EVVE). Residues 272–284 (DRDYYYDSFKGDD) show a composition bias toward basic and acidic residues. The BPTI/Kunitz inhibitor domain occupies 308-366 (VKAVCSQEAMTGPCRAVMPRWYFDLSKGKCVRFIYGGCGGNRNNFESEDYCMAVCKTMI). 3 disulfide bridges follow: Cys312/Cys362, Cys321/Cys345, and Cys337/Cys358. Residues 375–566 (DVDVYFETSA…QEIQEEIDEL (192 aa)) enclose the E2 domain. Ser592 is subject to Phosphoserine. A disordered region spans residues 597-616 (EIPPFHPFHPFPSLSENEDT). An O-linked (Xyl...) (chondroitin sulfate) serine glycan is attached at Ser628. Residues 696–718 (ALIGLLVIAVAIATVIVISLVML) form a helical membrane-spanning segment. Residues 719 to 765 (RKRQYGTISHGIVEVHPMLTPEERHLNKMQNHGYENPTYKYLEQMQI) are Cytoplasmic-facing. An interaction with DAB2 region spans residues 751 to 765 (GYENPTYKYLEQMQI). The NPXY motif signature appears at 752 to 757 (YENPTY).

Belongs to the APP family. As to quaternary structure, interacts with CPEB1. Interacts (via NPXY motif) with DAB2 (via PID domain); the interaction is impaired by tyrosine phosphorylation of the NPXY motif. Interacts (via cytoplasmic domain) with APBB2/FE65L. Interacts (via intracellular domain) with APBB3/FE65L2.

Its subcellular location is the membrane. In terms of biological role, may play a role in the regulation of hemostasis. The soluble form may have inhibitory properties towards coagulation factors. May interact with cellular G-protein signaling pathways. May bind to the DNA 5'-GTCACATG-3'(CDEI box). Inhibits trypsin, chymotrypsin, plasmin, factor XIA and plasma and glandular kallikrein. Modulates the Cu/Zn nitric oxide-catalyzed autodegradation of GPC1 heparan sulfate side chains in fibroblasts. The protein is Amyloid beta precursor like protein 2 of Rattus norvegicus (Rat).